The sequence spans 571 residues: Proline--tRNA ligase (571 aa).

This sequence belongs to the class-II aminoacyl-tRNA synthetase family. ProS type 1 subfamily. Homodimer.

Its subcellular location is the cytoplasm. It carries out the reaction tRNA(Pro) + L-proline + ATP = L-prolyl-tRNA(Pro) + AMP + diphosphate. Its function is as follows. Catalyzes the attachment of proline to tRNA(Pro) in a two-step reaction: proline is first activated by ATP to form Pro-AMP and then transferred to the acceptor end of tRNA(Pro). As ProRS can inadvertently accommodate and process non-cognate amino acids such as alanine and cysteine, to avoid such errors it has two additional distinct editing activities against alanine. One activity is designated as 'pretransfer' editing and involves the tRNA(Pro)-independent hydrolysis of activated Ala-AMP. The other activity is designated 'posttransfer' editing and involves deacylation of mischarged Ala-tRNA(Pro). The misacylated Cys-tRNA(Pro) is not edited by ProRS. This chain is Proline--tRNA ligase, found in Pseudomonas aeruginosa (strain LESB58).